We begin with the raw amino-acid sequence, 79 residues long: Hematopoietic cell signal transducer (79 aa).

Positions 1 to 18 are cleaved as a signal peptide; the sequence is MAPPGGILFLLLLPVAAA. Residues 19–35 are Extracellular-facing; the sequence is QVTSGSCSGCGPLSLPL. Residues 36 to 56 traverse the membrane as a helical segment; that stretch reads LAGLVAADAVVSLLIVVGVFV. The Cytoplasmic portion of the chain corresponds to 57–79; the sequence is CGRPRSRPTQEDGKIYINMPGRG. Y72 is modified (phosphotyrosine). The tract at residues 72–74 is GRB2 binding site; it reads YIN. The tract at residues 72 to 75 is PIK3R1 binding site; it reads YINM.

Belongs to the DAP10 family. As to quaternary structure, homodimer; Disulfide-linked. Heterohexamer composed of four subunits of HCST/DAP10 and two subunits of KLRK1. Interacts (via transmembrane domain) with KLRK1 (via transmembrane domain); the interaction is required for KLRK1 NK cell surface and induces NK cell-mediated cytotoxicity. Interacts with PIK3R1 and GRB2. Interacts with CLEC5A. Forms an CLEC5A/TYROBP/HCST trimolecular complex depending almost solely on TYROBP. Interacts with KLRK1. Interacts with CD300H. Post-translationally, phosphorylated; PIK3R1 and GRB2 associate specifically with tyrosine-phosphorylated HCST. O-glycosylated. As to expression, expressed predominantly in lymphohematopoietic tissues.

It localises to the membrane. In terms of biological role, transmembrane adapter protein which associates with KLRK1 to form an activation receptor KLRK1-HCST in lymphoid and myeloid cells; this receptor plays a major role in triggering cytotoxicity against target cells expressing cell surface ligands such as MHC class I chain-related MICA and MICB, and UL16-binding proteins (ULBPs); these ligands are up-regulated by stress conditions and pathological state such as viral infection and tumor transformation. Functions as a docking site for PI3-kinase PIK3R1 and GRB2. Interaction of ULBPs with KLRK1-HCST triggers calcium mobilization and activation of the PIK3R1, MAP2K/ERK, and JAK2/STAT5 signaling pathways. Both PIK3R1 and GRB2 are required for full KLRK1-HCST-mediated activation and ultimate killing of target cells. In NK cells, KLRK1-HCST signaling directly induces cytotoxicity and enhances cytokine production initiated via DAP12/TYROBP-associated receptors. In T-cells, it provides primarily costimulation for TCR-induced signals. KLRK1-HCST receptor plays a role in immune surveillance against tumors and is required for cytolysis of tumors cells; indeed, melanoma cells that do not express KLRK1 ligands escape from immune surveillance mediated by NK cells. The protein is Hematopoietic cell signal transducer (HCST) of Sus scrofa (Pig).